The following is a 290-amino-acid chain: MKVKVIPVLEDNYMYLVIEELTREAVAVDVAVPKRLLEIVGREGVSLTAVLTTHHHWDHARGNPELARLRPGLAVLGADERIFSLTRRLAHGEELRFGAIHVRCLLTPGHTAGHMSYFLWEDDCPDPPALFSGDALSVAGCGSCLEGSAQQMYQSLAELGTLPPETKVFCGHEHTLSNLEFAQKVEPCNDHVRAKLSWAKARPLSRRGKRVGGEGTGFGVGGALRQGLMVTGACGHSRRGMRMTCPLCRRLWARSASTTPSCGWREYGCCPGASTVTWTLRKASGDCVLG.

Histidine 54, histidine 56, aspartate 58, histidine 59, histidine 110, aspartate 134, and histidine 172 together coordinate Zn(2+).

Belongs to the metallo-beta-lactamase superfamily. Glyoxalase II family. It depends on Zn(2+) as a cofactor.

Functionally, hydrolase acting on ester bonds. This is Hydroxyacylglutathione hydrolase-like protein (HAGHL) from Homo sapiens (Human).